We begin with the raw amino-acid sequence, 602 residues long: Alpha-glucosides permease MPH3 (602 aa).

Topologically, residues 1 to 106 are cytoplasmic; that stretch reads MKNLSFLINR…AAAWSLLVST (106 aa). Residues 107–127 traverse the membrane as a helical segment; the sequence is TLIMEGYDTAILGAFYALPIF. Residues 128-142 are Extracellular-facing; it reads QRKFGSQNDKTGEWE. The helical transmembrane segment at 143–163 threads the bilayer; it reads ISASWQIGLTLCYMAGEIVGL. At 164–178 the chain is on the cytoplasmic side; that stretch reads QLTGPSVDLVGNRYT. A helical transmembrane segment spans residues 179 to 199; sequence LIIALFFLAAFTFILYFCNSL. A topological domain (extracellular) is located at residue glycine 200. The helical transmembrane segment at 201-221 threads the bilayer; it reads MIAVGQALCGMPWGCFQCLTV. The Cytoplasmic segment spans residues 222–234; the sequence is SYASEICPLALRY. Residues 235–255 traverse the membrane as a helical segment; that stretch reads YLTTYSNLCWLFGQLFAAGIM. The Extracellular segment spans residues 256–270; it reads KNSQKKYADSELGYK. A helical transmembrane segment spans residues 271–291; sequence LPFALQWILPVPLALGIFFAP. Residues 292–363 are Cytoplasmic-facing; sequence ESPWWLVKKG…EDKINRRRTR (72 aa). The helical transmembrane segment at 364–384 threads the bilayer; the sequence is ITCLCWAGQATCGSILIGYST. Residues 385-397 are Extracellular-facing; sequence YFYEKAGVSTEMS. A helical transmembrane segment spans residues 398–418; that stretch reads FTFSIIQYCLGICATFLSWWA. Topologically, residues 419-426 are cytoplasmic; the sequence is SKYFGRYD. Residues 427–447 traverse the membrane as a helical segment; sequence LYAFGLAFQTIVFFIIGGLGC. Topologically, residues 448 to 459 are extracellular; it reads SSTHGSKMGSGS. Residues 460–480 traverse the membrane as a helical segment; that stretch reads LLMAVAFFYNLGIAPVVFCLV. At 481 to 492 the chain is on the cytoplasmic side; that stretch reads SEMPSSRLRTKT. The helical transmembrane segment at 493-513 threads the bilayer; the sequence is IILARNTYNVVSIICSVLILY. At 514–525 the chain is on the extracellular side; that stretch reads QLNSKKWNWGAK. The helical transmembrane segment at 526–546 threads the bilayer; it reads SGFFWGVLCFCTLIWAVVDLP. Residues 547–602 lie on the Cytoplasmic side of the membrane; that stretch reads ETAGKTFVEINELFKLGVSARKFKSTKVDPFVVKTPPKDVSHNDPKGDIEASIAEE. Positions 582 to 595 are enriched in basic and acidic residues; it reads PPKDVSHNDPKGDI. The segment at 582 to 602 is disordered; sequence PPKDVSHNDPKGDIEASIAEE.

The protein belongs to the major facilitator superfamily. Sugar transporter (TC 2.A.1.1) family.

It localises to the cell membrane. In terms of biological role, high-affinity uptake of maltose and maltotriose. Also transports alpha-methylglucoside, glucose and turanose but not melezitose or trehalose. In Saccharomyces cerevisiae (strain ATCC 204508 / S288c) (Baker's yeast), this protein is Alpha-glucosides permease MPH3 (MPH3).